The sequence spans 1406 residues: Receptor-type tyrosine-protein phosphatase eta (1406 aa).

The N-terminal stretch at 1-24 (MRRLPLLPPCPLLLLLLLPAEVRC) is a signal peptide. Residues 25-1044 (TTACTDDCSL…LPQDPGVIAG (1020 aa)) lie on the Extracellular side of the membrane. N36, N52, N97, N103, N118, N124, N186, N192, N243, N275, N281, N296, N302, N331, N332, N364, N385, N391, N453, N459, N484, N500, N510, N547, N568, N630, N636, N651, N657, N719, N745, N750, N766, N776, N804, and N828 each carry an N-linked (GlcNAc...) asparagine glycan. A disordered region spans residues 39-72 (EEMGTSSNDELSVNATSGNRRLSEDVSLPGRAMS). Over residues 41–58 (MGTSSNDELSVNATSGNR) the composition is skewed to polar residues. Fibronectin type-III domains follow at residues 82 to 170 (AVLD…TKPS), 171 to 259 (PVLD…TKPS), 260 to 343 (PVLD…SLNL), 346 to 437 (KPSP…TKPS), 438 to 523 (PVLD…SLYT), 524 to 614 (KPTP…TKPR), 615 to 703 (AVLH…TKPS), 704 to 793 (MVLN…VPSS), 794 to 888 (VNAF…TDPP), and 887 to 979 (PPVP…IVDV). N-linked (GlcNAc...) asparagine glycosylation is present at N1010. The helical transmembrane segment at 1045–1065 (AVIGCLLAILAVVAIGGYIFW) threads the bilayer. At 1066–1406 (RRRRKDKRNT…AFGKANGYHA (341 aa)) the chain is on the cytoplasmic side. In terms of domain architecture, Tyrosine-protein phosphatase spans 1110–1367 (FAEEYEELKS…VFLNQCVMDI (258 aa)). Substrate is bound by residues D1274, 1308–1314 (CSAGVGR), and Q1352. C1308 acts as the Phosphocysteine intermediate in catalysis.

Belongs to the protein-tyrosine phosphatase family. Receptor class 3 subfamily. As to expression, found on the apical surfaces of retinal Mueller cells, renal tubule cells and intestinal brush border cells.

It is found in the cell membrane. It localises to the cell projection. Its subcellular location is the ruffle membrane. The protein resides in the cell junction. It catalyses the reaction O-phospho-L-tyrosyl-[protein] + H2O = L-tyrosyl-[protein] + phosphate. Tyrosine phosphatase which dephosphorylates or contributes to the dephosphorylation of several substrates. Plays a role in cell adhesion, migration, proliferation and differentiation. Has a role in megakaryocytes and platelet formation. May influence the potential of nonsensory supporting cells to either proliferate or differentiate into hair cells. In Gallus gallus (Chicken), this protein is Receptor-type tyrosine-protein phosphatase eta (PTPRJ).